Reading from the N-terminus, the 582-residue chain is DNA repair and recombination protein radC (582 aa).

A DNA-binding region spans residues 146-150 (KRALR). The span at 194 to 204 (KKEPMRVKPSL) shows a compositional bias: basic and acidic residues. Disordered stretches follow at residues 194-226 (KKEP…NSAA), 310-400 (QIPN…INGQ), and 485-582 (APSG…QHQH). The segment covering 326 to 335 (QNQYTNQRQS) has biased composition (polar residues). A compositionally biased stretch (low complexity) spans 516–529 (AAAQNNTAAANRMA).

It belongs to the RAD52 family. As to quaternary structure, part of a complex that includes RAD51, RAD52 and RAD59.

It localises to the nucleus. Functionally, involved in DNA double-strand break (DSB) repair and recombination. Promotes the annealing of complementary single-stranded DNA and by stimulation of the RAD51 recombinase. This is DNA repair and recombination protein radC (radC) from Emericella nidulans (strain FGSC A4 / ATCC 38163 / CBS 112.46 / NRRL 194 / M139) (Aspergillus nidulans).